Consider the following 425-residue polypeptide: L-cysteine:1D-myo-inositol 2-amino-2-deoxy-alpha-D-glucopyranoside ligase (425 aa).

Residue Cys-43 participates in Zn(2+) binding. Residues 43 to 46, Thr-58, and 81 to 83 contribute to the L-cysteinyl-5'-AMP site; these read CGIT and NVT. Residues 45-55 carry the 'HIGH' region motif; the sequence is ITPYDATHIGH. The short motif at 195 to 200 is the 'ERGGDP' region element; the sequence is ERGGDP. Trp-236 provides a ligand contact to L-cysteinyl-5'-AMP. A Zn(2+)-binding site is contributed by Cys-240. 258–260 provides a ligand contact to L-cysteinyl-5'-AMP; that stretch reads GSD. Residue His-265 participates in Zn(2+) binding. An L-cysteinyl-5'-AMP-binding site is contributed by Val-295. The short motif at 301–305 is the 'KMSKS' region element; it reads KMSKS.

It belongs to the class-I aminoacyl-tRNA synthetase family. MshC subfamily. In terms of assembly, monomer. Requires Zn(2+) as cofactor.

The catalysed reaction is 1D-myo-inositol 2-amino-2-deoxy-alpha-D-glucopyranoside + L-cysteine + ATP = 1D-myo-inositol 2-(L-cysteinylamino)-2-deoxy-alpha-D-glucopyranoside + AMP + diphosphate + H(+). Catalyzes the ATP-dependent condensation of GlcN-Ins and L-cysteine to form L-Cys-GlcN-Ins. In Sanguibacter keddieii (strain ATCC 51767 / DSM 10542 / NCFB 3025 / ST-74), this protein is L-cysteine:1D-myo-inositol 2-amino-2-deoxy-alpha-D-glucopyranoside ligase.